The primary structure comprises 347 residues: UPF0283 membrane protein ECA1987 (347 aa).

Residues 1 to 11 (MNEPLKPRVTF) are compositionally biased toward basic and acidic residues. The interval 1–48 (MNEPLKPRVTFDDVSPQEPQPQLRAGLAFDEQSSTPFSPISREEEVPE) is disordered. 3 helical membrane-spanning segments follow: residues 70–90 (MVMAGVALFGISALAQGVQSL), 99–119 (WIALGGITAGSLIVAAGVGSL), and 213–233 (ESTLMIAVSPLALVDMAFIAW).

It belongs to the UPF0283 family.

The protein resides in the cell inner membrane. In Pectobacterium atrosepticum (strain SCRI 1043 / ATCC BAA-672) (Erwinia carotovora subsp. atroseptica), this protein is UPF0283 membrane protein ECA1987.